We begin with the raw amino-acid sequence, 142 residues long: Large ribosomal subunit protein uL11 (142 aa).

The protein belongs to the universal ribosomal protein uL11 family. In terms of assembly, part of the ribosomal stalk of the 50S ribosomal subunit. Interacts with L10 and the large rRNA to form the base of the stalk. L10 forms an elongated spine to which L12 dimers bind in a sequential fashion forming a multimeric L10(L12)X complex. In terms of processing, one or more lysine residues are methylated.

In terms of biological role, forms part of the ribosomal stalk which helps the ribosome interact with GTP-bound translation factors. This Mycobacterium sp. (strain JLS) protein is Large ribosomal subunit protein uL11.